Consider the following 161-residue polypeptide: Phosphopantetheine adenylyltransferase (161 aa).

S11 contributes to the substrate binding site. ATP is bound by residues 11-12 and H19; that span reads SF. Residues K43, L75, and R89 each coordinate substrate. ATP is bound by residues 90–92, E100, and 125–131; these read GLR and YSFISSS.

The protein belongs to the bacterial CoaD family. As to quaternary structure, homohexamer. Requires Mg(2+) as cofactor.

It localises to the cytoplasm. It carries out the reaction (R)-4'-phosphopantetheine + ATP + H(+) = 3'-dephospho-CoA + diphosphate. It participates in cofactor biosynthesis; coenzyme A biosynthesis; CoA from (R)-pantothenate: step 4/5. In terms of biological role, reversibly transfers an adenylyl group from ATP to 4'-phosphopantetheine, yielding dephospho-CoA (dPCoA) and pyrophosphate. The protein is Phosphopantetheine adenylyltransferase of Staphylococcus haemolyticus (strain JCSC1435).